A 345-amino-acid polypeptide reads, in one-letter code: Probable aldo-keto reductase 4 (345 aa).

The active-site Proton donor is the tyrosine 63. A substrate-binding site is contributed by histidine 130. 209-219 (SPLGRGFFASG) is an NADP(+) binding site.

The protein belongs to the aldo/keto reductase family.

This is Probable aldo-keto reductase 4 from Arabidopsis thaliana (Mouse-ear cress).